The chain runs to 715 residues: Fatty acid oxidation complex subunit alpha (715 aa).

The tract at residues Met1–Thr190 is enoyl-CoA hydratase/isomerase. Position 297 (Asp297) interacts with substrate. Residues Lys312–Gly715 are 3-hydroxyacyl-CoA dehydrogenase. Residues Met325, Asp344, Val401–Glu403, Lys408, and Ser430 contribute to the NAD(+) site. Catalysis depends on His451, which acts as the For 3-hydroxyacyl-CoA dehydrogenase activity. Residue Asn454 coordinates NAD(+). Positions 501 and 660 each coordinate substrate.

This sequence in the N-terminal section; belongs to the enoyl-CoA hydratase/isomerase family. In the C-terminal section; belongs to the 3-hydroxyacyl-CoA dehydrogenase family. Heterotetramer of two alpha chains (FadB) and two beta chains (FadA).

The catalysed reaction is a (3S)-3-hydroxyacyl-CoA + NAD(+) = a 3-oxoacyl-CoA + NADH + H(+). The enzyme catalyses a (3S)-3-hydroxyacyl-CoA = a (2E)-enoyl-CoA + H2O. It carries out the reaction a 4-saturated-(3S)-3-hydroxyacyl-CoA = a (3E)-enoyl-CoA + H2O. It catalyses the reaction (3S)-3-hydroxybutanoyl-CoA = (3R)-3-hydroxybutanoyl-CoA. The catalysed reaction is a (3Z)-enoyl-CoA = a 4-saturated (2E)-enoyl-CoA. The enzyme catalyses a (3E)-enoyl-CoA = a 4-saturated (2E)-enoyl-CoA. The protein operates within lipid metabolism; fatty acid beta-oxidation. Functionally, involved in the aerobic and anaerobic degradation of long-chain fatty acids via beta-oxidation cycle. Catalyzes the formation of 3-oxoacyl-CoA from enoyl-CoA via L-3-hydroxyacyl-CoA. It can also use D-3-hydroxyacyl-CoA and cis-3-enoyl-CoA as substrate. The polypeptide is Fatty acid oxidation complex subunit alpha (Pseudomonas fragi).